We begin with the raw amino-acid sequence, 249 residues long: 2,5-diamino-6-ribosylamino-4(3H)-pyrimidinone 5'-phosphate reductase (249 aa).

Residues Thr-79, Asp-83, Met-164, and 187–191 (GGIVI) each bind NADP(+).

It belongs to the HTP reductase family. As to quaternary structure, homodimer.

The enzyme catalyses 2,5-diamino-6-(1-D-ribitylamino)pyrimidin-4(3H)-one 5'-phosphate + NADP(+) = 2,5-diamino-6-(1-D-ribosylamino)pyrimidin-4(3H)-one 5'-phosphate + NADPH + H(+). It catalyses the reaction 2,5-diamino-6-(1-D-ribitylamino)pyrimidin-4(3H)-one 5'-phosphate + NAD(+) = 2,5-diamino-6-(1-D-ribosylamino)pyrimidin-4(3H)-one 5'-phosphate + NADH + H(+). It participates in cofactor biosynthesis; riboflavin biosynthesis. Functionally, catalyzes an early step in riboflavin biosynthesis, the NADPH-dependent reduction of the ribose side chain of 2,5-diamino-6-ribosylamino-4(3H)-pyrimidinone 5'-phosphate, yielding 2,5-diamino-6-ribitylamino-4(3H)-pyrimidinone 5'-phosphate. This chain is 2,5-diamino-6-ribosylamino-4(3H)-pyrimidinone 5'-phosphate reductase (RIB7), found in Kluyveromyces marxianus (Yeast).